We begin with the raw amino-acid sequence, 299 residues long: Coenzyme PQQ synthesis protein B (299 aa).

It belongs to the PqqB family.

It participates in cofactor biosynthesis; pyrroloquinoline quinone biosynthesis. In terms of biological role, may be involved in the transport of PQQ or its precursor to the periplasm. This chain is Coenzyme PQQ synthesis protein B, found in Xanthomonas oryzae pv. oryzae (strain MAFF 311018).